Consider the following 3332-residue polypeptide: Nonribosomal peptide synthetase imqB (3332 aa).

The interval 230-622 is adenylation 1; it reads FSEQVKAHPG…IGRKDTQVKV (393 aa). In terms of domain architecture, Carrier 1 spans 764 to 846; sequence GRITPQEKLL…DMARCITRVD (83 aa). Position 801 is an O-(pantetheine 4'-phosphoryl)serine (Ser-801). The interval 886–1314 is condensation 1; sequence DIYPCTPLQE…NCLTRKELHQ (429 aa). Residues 1336–1740 are adenylation 2; sequence EVSNTRPTAP…GRKDRQLKVR (405 aa). The 75-residue stretch at 1880–1954 folds into the Carrier 2 domain; the sequence is AIATPKEEKL…EMAEKAAETG (75 aa). Ser-1915 carries the post-translational modification O-(pantetheine 4'-phosphoryl)serine. Residues 1992–2402 are condensation 2; it reads EDIYPCTPLQ…CLSEIDTQQI (411 aa). The segment at 2422–2819 is adenylation 3; it reads AQQAREHPAT…GRKDTQVKIR (398 aa). The Carrier 3 domain maps to 2963 to 3039; it reads EVATNDEAAV…DLASRIGRVE (77 aa). Ser-3000 is modified (O-(pantetheine 4'-phosphoryl)serine). A thioesterase (TE) domain region spans residues 3058 to 3323; sequence SSNPTLIQGQ…ETTRHIRDFC (266 aa).

It belongs to the NRP synthetase family.

Its pathway is secondary metabolite biosynthesis. Nonribosomal peptide synthetase; part of the gene cluster that mediates the biosynthesis of imizoquins A to D, tripeptide-derived alkaloids that serve a protective role against oxidative stress that are essential for normal germination. ImqB is a canonical three-module NRPS that assembles the tripeptide backbone of the imizoquins via condensation of Trp, Tyr, and Leu-derived precursors. N-methylation by imqF and phenol oxidation by imqC, followed by cyclization via the FAD-dependent oxidase imqH carry out the three-step transformation of L-tyrosine into tetrahydroisoquinoline. Importantly, this sequence requires the presence of a free amine in the tyrosine moiety, indicating that isoquinoline formation occurs prior to peptide bond formation. The imidazolidin-4-one ring of imizoquins could form following additional oxidation of the methyl-derived bridgehead carbon by imqH. Lastly, O-methylation by imqG and leucine hydroxylation by imqE complete biosynthesis of the imizoquins. This Aspergillus flavus (strain ATCC 200026 / FGSC A1120 / IAM 13836 / NRRL 3357 / JCM 12722 / SRRC 167) protein is Nonribosomal peptide synthetase imqB.